The following is a 592-amino-acid chain: NADH-ubiquinone oxidoreductase chain 5 (592 aa).

14 helical membrane-spanning segments follow: residues 36–56, 68–88, 89–109, 132–152, 169–189, 196–216, 229–249, 256–276, 279–299, 322–342, 364–386, 406–426, 451–471, and 534–554; these read LSMV…IYAI, FYII…SDNY, IMMF…ISFW, LFVI…FETM, MMLL…GWLL, TPVS…FVLV, LLVM…MAVV, VMAL…GSSA, LAMY…MSAG, LPFS…MPGL, YIMY…RVTY, STHM…LGYA, LPAM…LTTV, and ALIN…IVFF.

The protein belongs to the complex I subunit 5 family.

It is found in the mitochondrion inner membrane. The enzyme catalyses a ubiquinone + NADH + 5 H(+)(in) = a ubiquinol + NAD(+) + 4 H(+)(out). Functionally, core subunit of the mitochondrial membrane respiratory chain NADH dehydrogenase (Complex I) that is believed to belong to the minimal assembly required for catalysis. Complex I functions in the transfer of electrons from NADH to the respiratory chain. The immediate electron acceptor for the enzyme is believed to be ubiquinone. The polypeptide is NADH-ubiquinone oxidoreductase chain 5 (ND5) (Debaryomyces hansenii (strain ATCC 36239 / CBS 767 / BCRC 21394 / JCM 1990 / NBRC 0083 / IGC 2968) (Yeast)).